Consider the following 67-residue polypeptide: Beta-defensin 36 (67 aa).

Positions 1–22 are cleaved as a signal peptide; sequence MKLLLLTLAALLLVSQLTPGDA. Intrachain disulfides connect Cys-25–Cys-52, Cys-32–Cys-46, and Cys-36–Cys-53.

Belongs to the beta-defensin family.

Its subcellular location is the secreted. Its function is as follows. Has antibacterial activity. The polypeptide is Beta-defensin 36 (Defb36) (Mus musculus (Mouse)).